Reading from the N-terminus, the 875-residue chain is MSKSTAEIRQAFLDFFHSKGHQVVASSSLVPDNDPTLLFTNAGMNQFKDVFLGLDNRFYRRATTSQRCVRAGGKHNDLENVGYTARHHTFFEMLGNFSFGDYFKHDAIRFAWELLTGEHWFNLPKEKLWVTVYATDDEAYNIWASEVGIPAERIIRIGDNKGSAYASDNFWQMGDTGPCGPCSEIFYDHGEHIWGGPPGSPEEDGDRYIEIWNLVFMQFNRQADGTLLPLPKPSVDTGMGLERIAAVLQHVNSNYDIDLFKTLIAAAAEATGASDPDSKSLRVIADHIRSCVFLVSDGVVPSNEGRGYVLRRIIRRAIRHGNMLGASDTFFYKLVAPLIDVMGSAASQLQPQQAMVEQVLRAEEEQFARTLERGLTLLDDELAKLTGDTLDGETAFRLYDTYGFSLDLTADVCRERNLRVDEAGFERAMEAQRKRARESSGFGADYNSLLRVDETTRFFGYEHLEHQGRVTALFRDGQLVGVIRQGEEAVVVLDETPFYGESGGQVGDRGVLKAASGVFEVADTQKYGKAFGHQGKLSYGELKLGAQVTAQVDSARRERIRLNHSATHLLHAALRQVLGDHVGQKGSLVNDHYLRFDFSHNEAMKPEQIRRVEEIVNEQIRCNLPIQTDIMALEDARNKGAMALFGEKYEAQVRVLSMGDFSTELCGGTHASRTGDIGLFRIIAESGTAAGIRRIEAVTGEEALASLHQQSDLVQHIAQLVKGDSQTLVDKVRALQERSRQLEKDLQQLKNQQAAQESASLGRNVRDINGVKVLVRQLDSAEPKMLRTMVDDLKNQLGSAVIILATVAEGKVSLIAGVTKDLTDRVKAGDIVGHLAQQVGGKGGGRPDLAQAGGSDIAALPAALASVDAMLAAKL.

Zn(2+) contacts are provided by histidine 564, histidine 568, cysteine 666, and histidine 670.

This sequence belongs to the class-II aminoacyl-tRNA synthetase family. In terms of assembly, homotetramer. Requires Zn(2+) as cofactor.

The protein localises to the cytoplasm. The enzyme catalyses tRNA(Ala) + L-alanine + ATP = L-alanyl-tRNA(Ala) + AMP + diphosphate. In terms of biological role, catalyzes the attachment of alanine to tRNA(Ala) in a two-step reaction: alanine is first activated by ATP to form Ala-AMP and then transferred to the acceptor end of tRNA(Ala). Also edits incorrectly charged Ser-tRNA(Ala) and Gly-tRNA(Ala) via its editing domain. In Sodalis glossinidius (strain morsitans), this protein is Alanine--tRNA ligase.